Reading from the N-terminus, the 247-residue chain is Caffeoyl-CoA O-methyltransferase 1 (247 aa).

K21 provides a ligand contact to substrate. Residues T63, E85, 87-88, S93, D111, and A140 each bind S-adenosyl-L-methionine; that span reads GV. D163 contacts substrate. D163 contacts a divalent metal cation. Residue D165 participates in S-adenosyl-L-methionine binding. Residues D189 and N190 each coordinate a divalent metal cation. N194 provides a ligand contact to substrate.

It belongs to the class I-like SAM-binding methyltransferase superfamily. Cation-dependent O-methyltransferase family. CCoAMT subfamily. The cofactor is a divalent metal cation.

The catalysed reaction is (E)-caffeoyl-CoA + S-adenosyl-L-methionine = (E)-feruloyl-CoA + S-adenosyl-L-homocysteine + H(+). It participates in aromatic compound metabolism; phenylpropanoid biosynthesis. Functionally, methylates caffeoyl-CoA to feruloyl-CoA and 5-hydroxyferuloyl-CoA to sinapoyl-CoA. Plays a role in the synthesis of feruloylated polysaccharides. Involved in the reinforcement of the plant cell wall. Also involved in the responding to wounding or pathogen challenge by the increased formation of cell wall-bound ferulic acid polymers. The protein is Caffeoyl-CoA O-methyltransferase 1 (CCOAOMT1) of Populus trichocarpa (Western balsam poplar).